The following is a 146-amino-acid chain: MAALRLLLGIDYGTKQIGVAVGQAITGQARELCTLKAQNGVPDWDKVQALINEWKPDAIVVGLPLNMDGTPSDMSARAEKFSRKLNGRFGVTVYTHDERLTTFEAKGERMARGGQKGSYRDNPVDAIAAALLLQGWLDEHPELLNV.

Belongs to the YqgF nuclease family.

It is found in the cytoplasm. Functionally, could be a nuclease involved in processing of the 5'-end of pre-16S rRNA. This is Putative pre-16S rRNA nuclease from Pseudomonas syringae pv. syringae (strain B728a).